Reading from the N-terminus, the 218-residue chain is Adenylate kinase (218 aa).

10–15 (GAGKGT) contacts ATP. Residues 30–59 (STGDMLRAAVKAGTPLGVEAKKIMDAGALV) form an NMP region. Residues threonine 31, arginine 36, 57–59 (ALV), 85–88 (GFPR), and glutamine 92 each bind AMP. An LID region spans residues 122–159 (GRRSHTASGRTYHVKYNPPKVEGKDDVTGEPLIQREDD). Residues arginine 123 and 132–133 (TY) each bind ATP. Residues arginine 156 and arginine 167 each contribute to the AMP site. Glycine 203 provides a ligand contact to ATP.

The protein belongs to the adenylate kinase family. As to quaternary structure, monomer.

The protein localises to the cytoplasm. It catalyses the reaction AMP + ATP = 2 ADP. It participates in purine metabolism; AMP biosynthesis via salvage pathway; AMP from ADP: step 1/1. In terms of biological role, catalyzes the reversible transfer of the terminal phosphate group between ATP and AMP. Plays an important role in cellular energy homeostasis and in adenine nucleotide metabolism. The polypeptide is Adenylate kinase (Polaromonas sp. (strain JS666 / ATCC BAA-500)).